A 663-amino-acid chain; its full sequence is UvrABC system protein B (663 aa).

A Helicase ATP-binding domain is found at 26–183; that stretch reads DGLESGLAKQ…KRLAEMQYTR (158 aa). Position 39–46 (39–46) interacts with ATP; it reads GVTGSGKT. Residues 92–115 carry the Beta-hairpin motif; that stretch reads YYDYYQPEAYVPASDTFIEKDASI. The region spanning 430 to 596 is the Helicase C-terminal domain; that stretch reads QVDDLMSEIR…GINKSVEDIL (167 aa). In terms of domain architecture, UVR spans 624–659; it reads AKQINALEKQMYAHAQNMEFELAAKIRDEYLLLKEQ.

This sequence belongs to the UvrB family. Forms a heterotetramer with UvrA during the search for lesions. Interacts with UvrC in an incision complex.

Its subcellular location is the cytoplasm. The UvrABC repair system catalyzes the recognition and processing of DNA lesions. A damage recognition complex composed of 2 UvrA and 2 UvrB subunits scans DNA for abnormalities. Upon binding of the UvrA(2)B(2) complex to a putative damaged site, the DNA wraps around one UvrB monomer. DNA wrap is dependent on ATP binding by UvrB and probably causes local melting of the DNA helix, facilitating insertion of UvrB beta-hairpin between the DNA strands. Then UvrB probes one DNA strand for the presence of a lesion. If a lesion is found the UvrA subunits dissociate and the UvrB-DNA preincision complex is formed. This complex is subsequently bound by UvrC and the second UvrB is released. If no lesion is found, the DNA wraps around the other UvrB subunit that will check the other stand for damage. This Legionella pneumophila (strain Corby) protein is UvrABC system protein B.